Here is a 337-residue protein sequence, read N- to C-terminus: Anthranilate phosphoribosyltransferase (337 aa).

5-phospho-alpha-D-ribose 1-diphosphate is bound by residues G80, 83–84 (GD), T88, 90–93 (NIST), 108–116 (KHGNRAVSS), and S120. G80 contacts anthranilate. S92 provides a ligand contact to Mg(2+). Anthranilate is bound at residue N111. R166 is an anthranilate binding site. D224 and E225 together coordinate Mg(2+).

The protein belongs to the anthranilate phosphoribosyltransferase family. Homodimer. The cofactor is Mg(2+).

It catalyses the reaction N-(5-phospho-beta-D-ribosyl)anthranilate + diphosphate = 5-phospho-alpha-D-ribose 1-diphosphate + anthranilate. The protein operates within amino-acid biosynthesis; L-tryptophan biosynthesis; L-tryptophan from chorismate: step 2/5. In terms of biological role, catalyzes the transfer of the phosphoribosyl group of 5-phosphorylribose-1-pyrophosphate (PRPP) to anthranilate to yield N-(5'-phosphoribosyl)-anthranilate (PRA). This Anaeromyxobacter sp. (strain Fw109-5) protein is Anthranilate phosphoribosyltransferase.